The following is a 110-amino-acid chain: Nucleoid-associated protein SYO3AOP1_1366 (110 aa).

It belongs to the YbaB/EbfC family. As to quaternary structure, homodimer.

The protein resides in the cytoplasm. It is found in the nucleoid. Its function is as follows. Binds to DNA and alters its conformation. May be involved in regulation of gene expression, nucleoid organization and DNA protection. This chain is Nucleoid-associated protein SYO3AOP1_1366, found in Sulfurihydrogenibium sp. (strain YO3AOP1).